Reading from the N-terminus, the 576-residue chain is Phosphoenolpyruvate-protein phosphotransferase (576 aa).

The active-site Tele-phosphohistidine intermediate is the His189. Residues Arg296 and Arg332 each contribute to the phosphoenolpyruvate site. Glu431 and Asp455 together coordinate Mg(2+). Phosphoenolpyruvate-binding positions include 454–455 and Arg465; that span reads ND. The active-site Proton donor is Cys502.

This sequence belongs to the PEP-utilizing enzyme family. Homodimer. It depends on Mg(2+) as a cofactor.

It is found in the cytoplasm. It catalyses the reaction L-histidyl-[protein] + phosphoenolpyruvate = N(pros)-phospho-L-histidyl-[protein] + pyruvate. In terms of biological role, general (non sugar-specific) component of the phosphoenolpyruvate-dependent sugar phosphotransferase system (sugar PTS). This major carbohydrate active-transport system catalyzes the phosphorylation of incoming sugar substrates concomitantly with their translocation across the cell membrane. Enzyme I transfers the phosphoryl group from phosphoenolpyruvate (PEP) to the phosphoryl carrier protein (HPr). The polypeptide is Phosphoenolpyruvate-protein phosphotransferase (ptsI) (Buchnera aphidicola subsp. Baizongia pistaciae (strain Bp)).